The chain runs to 1091 residues: MVKPNNVKIKNKGNLKKSNESQNDYMKGKKLETKSYQKALLSKNSNNNNDGAQAKRLKKKEEFKKKLEKRQNTIVIKDKLKEPSTFLKEDQSFFDQNIFNDQDDYKHQQMNRININENFETNLFGDMMNEFDGDLNEDLDLLDYNDEVIDNSNFDNNGDQFNSEDEEFYDDEKQAKKSNKNKNADADNKKSKKSNKKEEIESSEKFESFPMDENNEQEEETTSKKKKKTGGFQSMDLTKNLLKAILKKGFNVPTPIQRKSIPMILDGHDIVGMARTGSGKTGAFVIPMIQKLGDHSTTVGVRAVILSPTRELAIQTFKVVKDFSQGTQLRTILIVGGDSMEDQFTDLARNPDIIIATPGRLMHHLLETGMSLSKVQYIVFDEADRLFEMGFNEQLTEILSKLSENRQTLLFSATLPSLLVDFVRAGLNNPKLINLDTDTKISENLSLSFFTLRHEEKLGVLLFLLKDIIYKKPQLPTTETTTTTTTNNESNQQQQKKSSTIIFVSTKYHVEFIHILLERAGIASTYIHGYLDPVARKINLAKFRSHQVGVMVVTDLAARGIDIPLLDNVINFDFPPKEKIFIHRVGRVARAGRSGIAYSLVSPDEVPYMIDLHLYLGRKFLNKFQYEGQTINDPKYSFYGTIPQTIIDRETEFVNVQRKECIELLSLTKTIHNAHKKYLSTRPGASHESNRRAKLMDKSKYHPMLSDHLNSNDQIRNDFIQSLKSFRPPQTVLELDARKNNVQVSIMKDKRKVHTNVIESQQKKLYLQQSETNLGPENEEFDYSKLDTRKRLLQLTENITEEMLRSNKSNDNNDNNKDIKMNENDDENDDDDEEGENDDDEEEENEKDEDDEEDENKNKFNIKIESSDKNDNNKKKLKSRSSSRDPNFFISATPENLIQERAMSISNRFTKDDEVNLVADTDRKQKKSMVWDKRKGKFVSSQADADRKNSKKLVRNEAGKLVEAKKSHKGYEEWKKKTHGRIQRVGEDENSKYQPNQKEYLPQKWRGQGREKEKKDNKASHAKGSHGLKGRPSELKDKNQISKNRSEKERKMRVNKTKGNPKGSKSKSGGGGGGKGSKFGSGKSKGGKSRK.

Disordered regions lie at residues 1 to 63 (MVKP…KEEF) and 150 to 231 (DNSN…KTGG). Positions 26-35 (MKGKKLETKS) are enriched in basic and acidic residues. Polar residues predominate over residues 150–161 (DNSNFDNNGDQF). Over residues 196-207 (KKEEIESSEKFE) the composition is skewed to basic and acidic residues. A Q motif motif is present at residues 230 to 258 (GGFQSMDLTKNLLKAILKKGFNVPTPIQR). The region spanning 261–433 (IPMILDGHDI…RAGLNNPKLI (173 aa)) is the Helicase ATP-binding domain. 274–281 (ARTGSGKT) lines the ATP pocket. The DEAD box motif lies at 381-384 (DEAD). In terms of domain architecture, Helicase C-terminal spans 478 to 632 (TETTTTTTTN…KFQYEGQTIN (155 aa)). Disordered stretches follow at residues 801 to 896 (EEML…TPEN) and 933 to 1091 (KRKG…KSRK). Residues 814–823 (DNNKDIKMNE) are compositionally biased toward basic and acidic residues. Residues 824 to 855 (NDDENDDDDEEGENDDDEEEENEKDEDDEEDE) are compositionally biased toward acidic residues. 3 stretches are compositionally biased toward basic and acidic residues: residues 865-874 (ESSDKNDNNK), 944-975 (DADRKNSKKLVRNEAGKLVEAKKSHKGYEEWK), and 1008-1019 (QGREKEKKDNKA). A compositionally biased stretch (basic residues) spans 1020–1029 (SHAKGSHGLK). A compositionally biased stretch (basic and acidic residues) spans 1031–1052 (RPSELKDKNQISKNRSEKERKM). Residues 1068 to 1079 (SGGGGGGKGSKF) show a composition bias toward gly residues.

This sequence belongs to the DEAD box helicase family. DDX54/DBP10 subfamily.

The protein resides in the nucleus. It is found in the nucleolus. The enzyme catalyses ATP + H2O = ADP + phosphate + H(+). ATP-binding RNA helicase which may be involved in the ribosome biogenesis. This is ATP-dependent RNA helicase ddx54 (helA) from Dictyostelium discoideum (Social amoeba).